We begin with the raw amino-acid sequence, 1102 residues long: WASH complex subunit 4 (1102 aa).

The protein belongs to the SWIP family. In terms of assembly, component of the WASH complex.

It localises to the early endosome. Its function is as follows. Acts at least in part as component of the WASH complex which may regulate wash nucleation-promoting factor (NPF) activity and is required for its membrane targeting during endosomal sorting. During embryogenesis, not involved in the wash-dependent developmental migration of hemocytes anteriorly from the tail. The chain is WASH complex subunit 4 from Drosophila melanogaster (Fruit fly).